Here is a 151-residue protein sequence, read N- to C-terminus: D-aminoacyl-tRNA deacylase (151 aa).

A Gly-cisPro motif, important for rejection of L-amino acids motif is present at residues 138–139; it reads GP.

The protein belongs to the DTD family. Homodimer.

It localises to the cytoplasm. The catalysed reaction is glycyl-tRNA(Ala) + H2O = tRNA(Ala) + glycine + H(+). The enzyme catalyses a D-aminoacyl-tRNA + H2O = a tRNA + a D-alpha-amino acid + H(+). An aminoacyl-tRNA editing enzyme that deacylates mischarged D-aminoacyl-tRNAs. Also deacylates mischarged glycyl-tRNA(Ala), protecting cells against glycine mischarging by AlaRS. Acts via tRNA-based rather than protein-based catalysis; rejects L-amino acids rather than detecting D-amino acids in the active site. By recycling D-aminoacyl-tRNA to D-amino acids and free tRNA molecules, this enzyme counteracts the toxicity associated with the formation of D-aminoacyl-tRNA entities in vivo and helps enforce protein L-homochirality. The sequence is that of D-aminoacyl-tRNA deacylase from Picosynechococcus sp. (strain ATCC 27264 / PCC 7002 / PR-6) (Agmenellum quadruplicatum).